The chain runs to 427 residues: tRNA(Ile)-lysidine synthase (427 aa).

27 to 32 (SGGVDS) contacts ATP.

It belongs to the tRNA(Ile)-lysidine synthase family.

The protein resides in the cytoplasm. It carries out the reaction cytidine(34) in tRNA(Ile2) + L-lysine + ATP = lysidine(34) in tRNA(Ile2) + AMP + diphosphate + H(+). Its function is as follows. Ligates lysine onto the cytidine present at position 34 of the AUA codon-specific tRNA(Ile) that contains the anticodon CAU, in an ATP-dependent manner. Cytidine is converted to lysidine, thus changing the amino acid specificity of the tRNA from methionine to isoleucine. The protein is tRNA(Ile)-lysidine synthase of Streptococcus equi subsp. equi (strain 4047).